The primary structure comprises 356 residues: AT-hook motif nuclear-localized protein 1 (356 aa).

Residues 1–127 (MVLNMESTGE…PSHLPPPSSH (127 aa)) form a disordered region. Positions 49 to 66 (VTPPPPQPSSHHTAPPPL) are enriched in pro residues. Residues 88-97 (MKKKRGRPRK) are compositionally biased toward basic residues. Positions 89–97 (KKKRGRPRK) match the Bipartite nuclear localization signal motif. Positions 89–101 (KKKRGRPRKYGPD) form a DNA-binding region, a.T hook. A compositionally biased stretch (low complexity) spans 106–118 (ALSPKPISSAPAP). Residues 167–309 (GGNFTPHIIT…KHDFMLSSPT (143 aa)) enclose the PPC domain. Residues 270–287 (GLLVAASPVQVVVGSFLA) are required for nuclear localization. The Nuclear localization signal motif lies at 295 to 302 (KPKKNKHD).

The protein localises to the nucleus. The protein resides in the nucleoplasm. It localises to the chromosome. In terms of biological role, transcription factor that specifically binds AT-rich DNA sequences related to the nuclear matrix attachment regions (MARs). May play a function in the positioning of chromatin fibers within the nucleus. The sequence is that of AT-hook motif nuclear-localized protein 1 from Arabidopsis thaliana (Mouse-ear cress).